A 263-amino-acid chain; its full sequence is Orotidine 5'-phosphate decarboxylase (263 aa).

Residues D38, 60–62 (KTH), 91–100 (DRKFADIGNT), Y213, and R232 each bind substrate. The active-site Proton donor is the K93.

The protein belongs to the OMP decarboxylase family.

It catalyses the reaction orotidine 5'-phosphate + H(+) = UMP + CO2. Its pathway is pyrimidine metabolism; UMP biosynthesis via de novo pathway; UMP from orotate: step 2/2. This chain is Orotidine 5'-phosphate decarboxylase (PYR4), found in Rhizomucor pusillus.